A 443-amino-acid chain; its full sequence is Phosphomevalonate kinase ERG8 (443 aa).

160 to 170 provides a ligand contact to ATP; the sequence is ANKTGLGSSAA.

Belongs to the GHMP kinase family. Mevalonate kinase subfamily.

It catalyses the reaction (R)-5-phosphomevalonate + ATP = (R)-5-diphosphomevalonate + ADP. It functions in the pathway isoprenoid biosynthesis; isopentenyl diphosphate biosynthesis via mevalonate pathway; isopentenyl diphosphate from (R)-mevalonate: step 2/3. Functionally, phosphomevalonate kinase; part of the second module of ergosterol biosynthesis pathway that includes the middle steps of the pathway. ERG8 converts 5-phosphomevalonate to 5-diphosphomevalonate. The second module is carried out in the vacuole and involves the formation of farnesyl diphosphate, which is also an important intermediate in the biosynthesis of ubiquinone, dolichol, heme and prenylated proteins. Activity by the mevalonate kinase ERG12 (FG05912) first converts mevalonate into 5-phosphomevalonate. 5-phosphomevalonate is then further converted to 5-diphosphomevalonate by the phosphomevalonate kinase ERG8 (FG09764). The diphosphomevalonate decarboxylase ERG19 (FG10424) then produces isopentenyl diphosphate. The isopentenyl-diphosphate delta-isomerase IDI1 (FG09722) then catalyzes the 1,3-allylic rearrangement of the homoallylic substrate isopentenyl (IPP) to its highly electrophilic allylic isomer, dimethylallyl diphosphate (DMAPP). Finally the farnesyl diphosphate synthase ERG20 (FG06784) catalyzes the sequential condensation of isopentenyl pyrophosphate with dimethylallyl pyrophosphate, and then with the resultant geranylpyrophosphate to the ultimate product farnesyl pyrophosphate. In Gibberella zeae (strain ATCC MYA-4620 / CBS 123657 / FGSC 9075 / NRRL 31084 / PH-1) (Wheat head blight fungus), this protein is Phosphomevalonate kinase ERG8.